A 150-amino-acid polypeptide reads, in one-letter code: Ribosome-binding factor A (150 aa).

Residues 126 to 150 (EVARDLSHDDDEDGGADEAPRNGDE) form a disordered region.

This sequence belongs to the RbfA family. As to quaternary structure, monomer. Binds 30S ribosomal subunits, but not 50S ribosomal subunits or 70S ribosomes.

The protein localises to the cytoplasm. Functionally, one of several proteins that assist in the late maturation steps of the functional core of the 30S ribosomal subunit. Associates with free 30S ribosomal subunits (but not with 30S subunits that are part of 70S ribosomes or polysomes). Required for efficient processing of 16S rRNA. May interact with the 5'-terminal helix region of 16S rRNA. This is Ribosome-binding factor A from Brucella suis (strain ATCC 23445 / NCTC 10510).